Consider the following 97-residue polypeptide: YcgL domain-containing protein PST_1364 (97 aa).

A YcgL domain is found at 3–87; that stretch reads LICSIYKSPR…AEDEYIEHLP (85 aa).

The polypeptide is YcgL domain-containing protein PST_1364 (Stutzerimonas stutzeri (strain A1501) (Pseudomonas stutzeri)).